We begin with the raw amino-acid sequence, 385 residues long: T-box transcription factor TBX10 (385 aa).

The segment at residues leucine 69–glutamate 252 is a DNA-binding region (T-box). Disordered stretches follow at residues glycine 283–leucine 310 and glutamine 328–glutamine 359. A compositionally biased stretch (polar residues) spans lysine 293 to asparagine 307. Over residues tyrosine 331–proline 347 the composition is skewed to low complexity.

Its subcellular location is the nucleus. Probable transcriptional regulator involved in developmental processes. This chain is T-box transcription factor TBX10 (Tbx10), found in Mus musculus (Mouse).